Here is a 366-residue protein sequence, read N- to C-terminus: tRNA/tmRNA (uracil-C(5))-methyltransferase (366 aa).

5 residues coordinate S-adenosyl-L-methionine: glutamine 190, tyrosine 218, asparagine 223, glutamate 239, and aspartate 299. Catalysis depends on cysteine 324, which acts as the Nucleophile. The active-site Proton acceptor is glutamate 358.

Belongs to the class I-like SAM-binding methyltransferase superfamily. RNA M5U methyltransferase family. TrmA subfamily.

The catalysed reaction is uridine(54) in tRNA + S-adenosyl-L-methionine = 5-methyluridine(54) in tRNA + S-adenosyl-L-homocysteine + H(+). The enzyme catalyses uridine(341) in tmRNA + S-adenosyl-L-methionine = 5-methyluridine(341) in tmRNA + S-adenosyl-L-homocysteine + H(+). Functionally, dual-specificity methyltransferase that catalyzes the formation of 5-methyluridine at position 54 (m5U54) in all tRNAs, and that of position 341 (m5U341) in tmRNA (transfer-mRNA). The sequence is that of tRNA/tmRNA (uracil-C(5))-methyltransferase from Salmonella arizonae (strain ATCC BAA-731 / CDC346-86 / RSK2980).